The following is a 596-amino-acid chain: Thioredoxin reductase 1, mitochondrial (596 aa).

Residues 59–87 are disordered; that stretch reads LTGQRGSRDSTGATGGNAPAGSGAGAPPP. Residues 68 to 79 show a composition bias toward low complexity; it reads STGATGGNAPAG. FAD-binding positions include 120 to 126, 143 to 147, 159 to 170, 233 to 235, 262 to 266, serine 282, phenylalanine 286, and tyrosine 302; these read IGGGSAG, LDFVK, GGTCVNVGCIPK, GLG, and AVGGR. Cysteine 162 and cysteine 167 are oxidised to a cystine. Residues 322–328 and proline 355 each bind NADP(+); that span reads VRSIVLR. FAD-binding positions include 392–399, 429–432, 438–443, and phenylalanine 472; these read RKGLVDDL, VGDI, and ELTPVA. The Proton acceptor role is filled by histidine 569. Proline 570 is an FAD binding site. The cysteines at positions 594 and 595 are disulfide-linked.

The protein belongs to the class-I pyridine nucleotide-disulfide oxidoreductase family. As to quaternary structure, homodimer. Requires FAD as cofactor. In terms of tissue distribution, during embryogenesis, expression is seen in germ cell progenitors, developing midgut, hindgut and proventriculus.

The protein resides in the mitochondrion. It is found in the cytoplasm. It catalyses the reaction [thioredoxin]-dithiol + NADP(+) = [thioredoxin]-disulfide + NADPH + H(+). Thioredoxin system is a major player in glutathione metabolism, due to the demonstrated absence of a glutathione reductase. Functionally interacts with the Sod/Cat reactive oxidation species (ROS) defense system and thereby has a role in preadult development and life span. Lack of a glutathione reductase suggests antioxidant defense in Drosophila, and probably in related insects, differs fundamentally from that in other organisms. This Drosophila melanogaster (Fruit fly) protein is Thioredoxin reductase 1, mitochondrial.